Reading from the N-terminus, the 482-residue chain is 3-isopropylmalate dehydratase large subunit (482 aa).

[4Fe-4S] cluster-binding residues include C353, C414, and C417.

Belongs to the aconitase/IPM isomerase family. LeuC type 1 subfamily. Heterodimer of LeuC and LeuD. The cofactor is [4Fe-4S] cluster.

The catalysed reaction is (2R,3S)-3-isopropylmalate = (2S)-2-isopropylmalate. Its pathway is amino-acid biosynthesis; L-leucine biosynthesis; L-leucine from 3-methyl-2-oxobutanoate: step 2/4. Catalyzes the isomerization between 2-isopropylmalate and 3-isopropylmalate, via the formation of 2-isopropylmaleate. The sequence is that of 3-isopropylmalate dehydratase large subunit from Xanthomonas oryzae pv. oryzae (strain MAFF 311018).